Reading from the N-terminus, the 715-residue chain is Transcription activator of gluconeogenesis MGYG_02011 (715 aa).

The segment covering 1-14 has biased composition (polar residues); sequence MSPHQTTGQESDNM. A disordered region spans residues 1-28; sequence MSPHQTTGQESDNMAVNGENAPASSQYI. Positions 66 to 94 form a DNA-binding region, zn(2)-C6 fungal-type; the sequence is CYACQRGHLTCGDERPCQRCIKRGFQDAC. Composition is skewed to polar residues over residues 129–166, 179–191, 203–223, and 362–385; these read QNNV…PQNK, YASQ…TYQI, SLPQ…GQFN, and MMTT…RPNA. Disordered stretches follow at residues 129-223, 354-414, 534-569, and 628-663; these read QNNV…GQFN, SPAS…RRRH, NHNV…NSST, and GSNG…NGRG. Over residues 386-400 the composition is skewed to low complexity; it reads SVSQQRQQPVVSTPQ. Polar residues-rich tracts occupy residues 535-554 and 639-649; these read HNVN…SRGS and GEASSSEANEL. A compositionally biased stretch (low complexity) spans 650 to 662; sequence NGSNANGATTNGR.

This sequence belongs to the ERT1/acuK family.

Its subcellular location is the nucleus. Its function is as follows. Transcription factor which regulates nonfermentable carbon utilization. Activator of gluconeogenetic genes. The protein is Transcription activator of gluconeogenesis MGYG_02011 of Arthroderma gypseum (strain ATCC MYA-4604 / CBS 118893) (Microsporum gypseum).